The chain runs to 382 residues: Regulatory protein RapC (382 aa).

TPR repeat units lie at residues 102–138 (YYVN…VADH), 149–182 (AEAY…NVRI), 183–216 (IQCH…AQAE), 223–256 (GRAY…FESS), and 263–296 (PQAY…AKET).

The protein belongs to the Rap family. As to quaternary structure, homodimer. Interacts specifically with the C-terminal DNA-binding domain of ComA. Interacts with CSF.

The protein resides in the cytoplasm. With respect to regulation, inhibited by the competence and sporulation stimulating factor (CSF), encoded by phrC, which prevents RapC-ComA interaction. In terms of biological role, involved in the regulation of genetic competence development. Inhibits the activity of ComA, a transcriptional factor that regulates the development of genetic competence. Acts by binding to ComA, independently of its phosphorylation state, leading to the inhibition of ComA DNA-binding activity. Does not dephosphorylate phospho-ComA and does not affect the phosphorylation level of the ComP-ComA system. The protein is Regulatory protein RapC (rapC) of Bacillus subtilis (strain 168).